The sequence spans 232 residues: Ribose-5-phosphate isomerase A (232 aa).

Substrate is bound by residues 28–31, 83–86, and 96–99; these read TGST, DGAD, and KGGG. Residue E105 is the Proton acceptor of the active site. A substrate-binding site is contributed by K123.

It belongs to the ribose 5-phosphate isomerase family. As to quaternary structure, homodimer.

The catalysed reaction is aldehydo-D-ribose 5-phosphate = D-ribulose 5-phosphate. It functions in the pathway carbohydrate degradation; pentose phosphate pathway; D-ribose 5-phosphate from D-ribulose 5-phosphate (non-oxidative stage): step 1/1. Catalyzes the reversible conversion of ribose-5-phosphate to ribulose 5-phosphate. The protein is Ribose-5-phosphate isomerase A of Rhizobium etli (strain CIAT 652).